The primary structure comprises 244 residues: Transmembrane protein 176A (244 aa).

Phosphoserine is present on serine 42. 4 helical membrane passes run 60 to 80, 92 to 112, 122 to 142, and 204 to 224; these read VLVA…VLGG, SEGA…VAFL, ALMR…AIVI, and LLGI…VYIW.

Belongs to the TMEM176 family. Interacts with MCOLN2. Specifically expressed in lung, kidney and spleen.

It localises to the membrane. The sequence is that of Transmembrane protein 176A (Tmem176a) from Mus musculus (Mouse).